The sequence spans 81 residues: Sulfur carrier protein TusA (81 aa).

Residue C19 is the Cysteine persulfide intermediate of the active site.

Belongs to the sulfur carrier protein TusA family. Interacts with IscS.

The protein localises to the cytoplasm. It participates in tRNA modification. Functionally, sulfur carrier protein involved in sulfur trafficking in the cell. Part of a sulfur-relay system required for 2-thiolation during synthesis of 2-thiouridine of the modified wobble base 5-methylaminomethyl-2-thiouridine (mnm(5)s(2)U) in tRNA. Interacts with IscS and stimulates its cysteine desulfurase activity. Accepts an activated sulfur from IscS, which is then transferred to TusD, and thus determines the direction of sulfur flow from IscS to 2-thiouridine formation. Also appears to be involved in sulfur transfer for the biosynthesis of molybdopterin. The sequence is that of Sulfur carrier protein TusA from Klebsiella pneumoniae subsp. pneumoniae (strain ATCC 700721 / MGH 78578).